Consider the following 294-residue polypeptide: Phosphatidylglycerol--prolipoprotein diacylglyceryl transferase (294 aa).

Helical transmembrane passes span 21-41 (VSLH…LWLA), 60-80 (LLYV…VLFY), 96-116 (WDGG…MIWF), 124-144 (FFQV…LGRI), 199-219 (SQLY…NIFV), 226-246 (GSVS…VEFF), and 259-279 (ISMG…FMVW). Arginine 143 is a binding site for a 1,2-diacyl-sn-glycero-3-phospho-(1'-sn-glycerol).

The protein belongs to the Lgt family.

Its subcellular location is the cell inner membrane. It catalyses the reaction L-cysteinyl-[prolipoprotein] + a 1,2-diacyl-sn-glycero-3-phospho-(1'-sn-glycerol) = an S-1,2-diacyl-sn-glyceryl-L-cysteinyl-[prolipoprotein] + sn-glycerol 1-phosphate + H(+). It participates in protein modification; lipoprotein biosynthesis (diacylglyceryl transfer). Catalyzes the transfer of the diacylglyceryl group from phosphatidylglycerol to the sulfhydryl group of the N-terminal cysteine of a prolipoprotein, the first step in the formation of mature lipoproteins. The protein is Phosphatidylglycerol--prolipoprotein diacylglyceryl transferase of Proteus mirabilis (strain HI4320).